A 198-amino-acid chain; its full sequence is Dephospho-CoA kinase (198 aa).

Positions 4 to 198 (IIGITGGIAS…DSQLRRLQNE (195 aa)) constitute a DPCK domain. 12 to 17 (ASGKST) contacts ATP.

The protein belongs to the CoaE family.

Its subcellular location is the cytoplasm. The enzyme catalyses 3'-dephospho-CoA + ATP = ADP + CoA + H(+). Its pathway is cofactor biosynthesis; coenzyme A biosynthesis; CoA from (R)-pantothenate: step 5/5. Its function is as follows. Catalyzes the phosphorylation of the 3'-hydroxyl group of dephosphocoenzyme A to form coenzyme A. This Streptococcus mutans serotype c (strain ATCC 700610 / UA159) protein is Dephospho-CoA kinase.